We begin with the raw amino-acid sequence, 240 residues long: Ubiquinone biosynthesis O-methyltransferase (240 aa).

4 residues coordinate S-adenosyl-L-methionine: Arg-44, Gly-64, Asp-85, and Met-129.

It belongs to the methyltransferase superfamily. UbiG/COQ3 family.

It catalyses the reaction a 3-demethylubiquinol + S-adenosyl-L-methionine = a ubiquinol + S-adenosyl-L-homocysteine + H(+). The enzyme catalyses a 3-(all-trans-polyprenyl)benzene-1,2-diol + S-adenosyl-L-methionine = a 2-methoxy-6-(all-trans-polyprenyl)phenol + S-adenosyl-L-homocysteine + H(+). Its pathway is cofactor biosynthesis; ubiquinone biosynthesis. O-methyltransferase that catalyzes the 2 O-methylation steps in the ubiquinone biosynthetic pathway. This Photorhabdus laumondii subsp. laumondii (strain DSM 15139 / CIP 105565 / TT01) (Photorhabdus luminescens subsp. laumondii) protein is Ubiquinone biosynthesis O-methyltransferase.